A 598-amino-acid chain; its full sequence is Elongation factor 4 (598 aa).

A tr-type G domain is found at 5-187 (SHIRNFSIIA…RLVATIPAPT (183 aa)). Residues 17 to 22 (DHGKST) and 134 to 137 (NKMD) contribute to the GTP site.

This sequence belongs to the TRAFAC class translation factor GTPase superfamily. Classic translation factor GTPase family. LepA subfamily.

It is found in the cell inner membrane. It carries out the reaction GTP + H2O = GDP + phosphate + H(+). Functionally, required for accurate and efficient protein synthesis under certain stress conditions. May act as a fidelity factor of the translation reaction, by catalyzing a one-codon backward translocation of tRNAs on improperly translocated ribosomes. Back-translocation proceeds from a post-translocation (POST) complex to a pre-translocation (PRE) complex, thus giving elongation factor G a second chance to translocate the tRNAs correctly. Binds to ribosomes in a GTP-dependent manner. In Pseudomonas syringae pv. syringae (strain B728a), this protein is Elongation factor 4.